The sequence spans 233 residues: Homeobox protein EMX1 (233 aa).

Residues 135–194 constitute a DNA-binding region (homeobox); sequence PKRIRTAFSPSQLLRLERAFEKNHYVVGAERKQLASSLSLSETQVKVWFQNRRTKYKRQK. The interval 192–233 is disordered; the sequence is RQKLEEEGPDSDQKKKGSHHINRWRLATKQPNGEDIDVTSND. Residues 193–206 show a composition bias toward basic and acidic residues; the sequence is QKLEEEGPDSDQKK.

It belongs to the EMX homeobox family.

The protein resides in the nucleus. Functionally, may function in combinations with OTX1/2 to specify cell fates in the developing central nervous system. The polypeptide is Homeobox protein EMX1 (emx1) (Xenopus tropicalis (Western clawed frog)).